The sequence spans 727 residues: Fatty acid oxidation complex subunit alpha (727 aa).

Residues 16 to 205 (NQTASVFSFD…RLGLVDDAVP (190 aa)) are enoyl-CoA hydratase. The interval 321–727 (AKIKHVGILG…MAEQNKSFYP (407 aa)) is 3-hydroxyacyl-CoA dehydrogenase.

This sequence in the N-terminal section; belongs to the enoyl-CoA hydratase/isomerase family. In the central section; belongs to the 3-hydroxyacyl-CoA dehydrogenase family. Heterotetramer of two alpha chains (FadJ) and two beta chains (FadI).

It is found in the cytoplasm. It carries out the reaction a (3S)-3-hydroxyacyl-CoA = a (2E)-enoyl-CoA + H2O. The catalysed reaction is a 4-saturated-(3S)-3-hydroxyacyl-CoA = a (3E)-enoyl-CoA + H2O. It catalyses the reaction a (3S)-3-hydroxyacyl-CoA + NAD(+) = a 3-oxoacyl-CoA + NADH + H(+). The enzyme catalyses (3S)-3-hydroxybutanoyl-CoA = (3R)-3-hydroxybutanoyl-CoA. It functions in the pathway lipid metabolism; fatty acid beta-oxidation. Its function is as follows. Catalyzes the formation of a hydroxyacyl-CoA by addition of water on enoyl-CoA. Also exhibits 3-hydroxyacyl-CoA epimerase and 3-hydroxyacyl-CoA dehydrogenase activities. In Photorhabdus laumondii subsp. laumondii (strain DSM 15139 / CIP 105565 / TT01) (Photorhabdus luminescens subsp. laumondii), this protein is Fatty acid oxidation complex subunit alpha.